A 172-amino-acid polypeptide reads, in one-letter code: Adenine phosphoribosyltransferase (172 aa).

This sequence belongs to the purine/pyrimidine phosphoribosyltransferase family. In terms of assembly, homodimer.

The protein localises to the cytoplasm. The enzyme catalyses AMP + diphosphate = 5-phospho-alpha-D-ribose 1-diphosphate + adenine. It functions in the pathway purine metabolism; AMP biosynthesis via salvage pathway; AMP from adenine: step 1/1. In terms of biological role, catalyzes a salvage reaction resulting in the formation of AMP, that is energically less costly than de novo synthesis. This chain is Adenine phosphoribosyltransferase, found in Prochlorococcus marinus (strain MIT 9211).